Reading from the N-terminus, the 118-residue chain is Large ribosomal subunit protein uL18 (118 aa).

This sequence belongs to the universal ribosomal protein uL18 family. As to quaternary structure, part of the 50S ribosomal subunit; part of the 5S rRNA/L5/L18/L25 subcomplex. Contacts the 5S and 23S rRNAs.

This is one of the proteins that bind and probably mediate the attachment of the 5S RNA into the large ribosomal subunit, where it forms part of the central protuberance. The sequence is that of Large ribosomal subunit protein uL18 from Helicobacter hepaticus (strain ATCC 51449 / 3B1).